The following is a 393-amino-acid chain: Na(+)/H(+) antiporter NhaA (393 aa).

12 helical membrane passes run 23-43 (AGGI…NSPF), 58-78 (LSLA…LVGL), 96-116 (MLPG…FAVL), 126-146 (GWAV…SLLG), 155-175 (VFLA…IAIF), 178-198 (AEIS…LFVM), 201-221 (MGVV…FFVF), 224-244 (GVHA…KPAP), 265-285 (VAFI…FKGL), 298-318 (ILLG…WLAI), 334-354 (LYGV…IGLL), and 367-387 (IGVL…LRAA).

It belongs to the NhaA Na(+)/H(+) (TC 2.A.33) antiporter family.

It is found in the cell inner membrane. The catalysed reaction is Na(+)(in) + 2 H(+)(out) = Na(+)(out) + 2 H(+)(in). Functionally, na(+)/H(+) antiporter that extrudes sodium in exchange for external protons. The chain is Na(+)/H(+) antiporter NhaA from Brucella canis (strain ATCC 23365 / NCTC 10854 / RM-666).